A 148-amino-acid polypeptide reads, in one-letter code: Ubiquitin-conjugating enzyme E2-17 kDa (148 aa).

A UBC core domain is found at 1-147 (MASKRILKEL…ARSWTQKYAM (147 aa)). Residue cysteine 85 is the Glycyl thioester intermediate of the active site.

Belongs to the ubiquitin-conjugating enzyme family.

It catalyses the reaction S-ubiquitinyl-[E1 ubiquitin-activating enzyme]-L-cysteine + [E2 ubiquitin-conjugating enzyme]-L-cysteine = [E1 ubiquitin-activating enzyme]-L-cysteine + S-ubiquitinyl-[E2 ubiquitin-conjugating enzyme]-L-cysteine.. It participates in protein modification; protein ubiquitination. Its function is as follows. Catalyzes the covalent attachment of ubiquitin to other proteins. Mediates the selective degradation of short-lived and abnormal proteins. This Solanum lycopersicum (Tomato) protein is Ubiquitin-conjugating enzyme E2-17 kDa.